The following is a 117-amino-acid chain: Neurotoxic enhancer CSTX-13 (117 aa).

The signal sequence occupies residues 1–20 (MKVLVIFAVLSLVIFSNCSA). The propeptide occupies 21-47 (ETDEDFFGEESFEADDIIPFIAKEQVR). Intrachain disulfides connect cysteine 50–cysteine 65, cysteine 57–cysteine 74, cysteine 64–cysteine 95, and cysteine 76–cysteine 93. A propeptide spanning residues 82 to 87 (RSETAR) is cleaved from the precursor. Threonine 116 bears the Threonine amide mark.

Belongs to the neurotoxin 19 (CSTX) family. 12 subfamily. In terms of assembly, heterodimer of A and B chains; disulfide-linked. Interacts with CSTX-1 (AC P81694) (Kd=430 nM), and with CSTX-9 (AC P58604) (Kd=370 nM). In terms of tissue distribution, expressed by the venom gland.

It is found in the secreted. Its subcellular location is the target cell membrane. Its function is as follows. Synergistic toxin that induces or increases a cytolytic effect when combined with CSTX-1 (AC P81694) or CSTX-9 (AC P58604). When alone, has a weak insecticidal activity, with an unknown molecular target. The protein is Neurotoxic enhancer CSTX-13 of Cupiennius salei (American wandering spider).